Consider the following 194-residue polypeptide: Holliday junction branch migration complex subunit RuvA (194 aa).

Residues 1-64 are domain I; sequence MISRLTGKLV…EDAHLLFGFA (64 aa). The tract at residues 65-143 is domain II; the sequence is TAEERKTFRQ…AHTVTDGLFA (79 aa). The segment at 144 to 147 is flexible linker; that stretch reads AAPA. The domain III stretch occupies residues 147-194; that stretch reads AADETEDIVSTLLALGYSEREAKAAVKGVPEGTDVGEGVRLALKNLLK.

It belongs to the RuvA family. In terms of assembly, homotetramer. Forms an RuvA(8)-RuvB(12)-Holliday junction (HJ) complex. HJ DNA is sandwiched between 2 RuvA tetramers; dsDNA enters through RuvA and exits via RuvB. An RuvB hexamer assembles on each DNA strand where it exits the tetramer. Each RuvB hexamer is contacted by two RuvA subunits (via domain III) on 2 adjacent RuvB subunits; this complex drives branch migration. In the full resolvosome a probable DNA-RuvA(4)-RuvB(12)-RuvC(2) complex forms which resolves the HJ.

The protein localises to the cytoplasm. In terms of biological role, the RuvA-RuvB-RuvC complex processes Holliday junction (HJ) DNA during genetic recombination and DNA repair, while the RuvA-RuvB complex plays an important role in the rescue of blocked DNA replication forks via replication fork reversal (RFR). RuvA specifically binds to HJ cruciform DNA, conferring on it an open structure. The RuvB hexamer acts as an ATP-dependent pump, pulling dsDNA into and through the RuvAB complex. HJ branch migration allows RuvC to scan DNA until it finds its consensus sequence, where it cleaves and resolves the cruciform DNA. This is Holliday junction branch migration complex subunit RuvA from Neisseria meningitidis serogroup B (strain ATCC BAA-335 / MC58).